We begin with the raw amino-acid sequence, 173 residues long: Large ribosomal subunit protein uL10 (173 aa).

The protein belongs to the universal ribosomal protein uL10 family. As to quaternary structure, part of the ribosomal stalk of the 50S ribosomal subunit. The N-terminus interacts with L11 and the large rRNA to form the base of the stalk. The C-terminus forms an elongated spine to which L12 dimers bind in a sequential fashion forming a multimeric L10(L12)X complex.

Forms part of the ribosomal stalk, playing a central role in the interaction of the ribosome with GTP-bound translation factors. This is Large ribosomal subunit protein uL10 from Chloroherpeton thalassium (strain ATCC 35110 / GB-78).